The primary structure comprises 1479 residues: MAKRSRGPGRRCLLALVLFCAWGTLAVVAQKPGAGCPSRCLCFRTTVRCMHLLLEAVPAVAPQTSILDLRFNRIREIQPGAFRRLRNLNTLLLNNNQIKRIPSGAFEDLENLKYLYLYKNEIQSIDRQAFKGLASLEQLYLHFNQIETLDPDSFQHLPKLERLFLHNNRITHLVPGTFNHLESMKRLRLDSNTLHCDCEILWLADLLKTYAESGNAQAAAICEYPRRIQGRSVATITPEELNCERPRITSEPQDADVTSGNTVYFTCRAEGNPKPEIIWLRNNNELSMKTDSRLNLLDDGTLMIQNTQETDQGIYQCMAKNVAGEVKTQEVTLRYFGSPARPTFVIQPQNTEVLVGESVTLECSATGHPPPRISWTRGDRTPLPVDPRVNITPSGGLYIQNVVQGDSGEYACSATNNIDSVHATAFIIVQALPQFTVTPQDRVVIEGQTVDFQCEAKGNPPPVIAWTKGGSQLSVDRRHLVLSSGTLRISGVALHDQGQYECQAVNIIGSQKVVAHLTVQPRVTPVFASIPSDTTVEVGANVQLPCSSQGEPEPAITWNKDGVQVTESGKFHISPEGFLTINDVGPADAGRYECVARNTIGSASVSMVLSVNVPDVSRNGDPFVATSIVEAIATVDRAINSTRTHLFDSRPRSPNDLLALFRYPRDPYTVEQARAGEIFERTLQLIQEHVQHGLMVDLNGTSYHYNDLVSPQYLNLIANLSGCTAHRRVNNCSDMCFHQKYRTHDGTCNNLQHPMWGASLTAFERLLKSVYENGFNTPRGINPHRLYNGHALPMPRLVSTTLIGTETVTPDEQFTHMLMQWGQFLDHDLDSTVVALSQARFSDGQHCSNVCSNDPPCFSVMIPPNDSRARSGARCMFFVRSSPVCGSGMTSLLMNSVYPREQINQLTSYIDASNVYGSTEHEARSIRDLASHRGLLRQGIVQRSGKPLLPFATGPPTECMRDENESPIPCFLAGDHRANEQLGLTSMHTLWFREHNRIATELLKLNPHWDGDTIYYETRKIVGAEIQHITYQHWLPKILGEVGMRTLGEYHGYDPGINAGIFNAFATAAFRFGHTLVNPLLYRLDENFQPIAQDHLPLHKAFFSPFRIVNEGGIDPLLRGLFGVAGKMRVPSQLLNTELTERLFSMAHTVALDLAAINIQRGRDHGIPPYHDYRVYCNLSAAHTFEDLKNEIKNPEIREKLKRLYGSTLNIDLFPALVVEDLVPGSRLGPTLMCLLSTQFKRLRDGDRLWYENPGVFSPAQLTQIKQTSLARILCDNADNITRVQSDVFRVAEFPHGYGSCDEIPRVDLRVWQDCCEDCRTRGQFNAFSYHFRGRRSLEFSYQEDKPTKKTRPRKIPSVGRQGEHLSNSTSAFSTRSDASGTNDFREFVLEMQKTITDLRTQIKKLESRLSTTECVDAGGESHANNTKWKKDACTICECKDGQVTCFVEACPPATCAVPVNIPGACCPVCLQKRAEEKP.

A signal peptide spans 1–26 (MAKRSRGPGRRCLLALVLFCAWGTLA). One can recognise an LRRNT domain in the interval 27-63 (VVAQKPGAGCPSRCLCFRTTVRCMHLLLEAVPAVAPQ). Disulfide bonds link Cys-36–Cys-42 and Cys-40–Cys-49. LRR repeat units follow at residues 61–84 (APQTSILDLRFNRIREIQPGAFRR), 85–108 (LRNLNTLLLNNNQIKRIPSGAFED), 110–132 (ENLKYLYLYKNEIQSIDRQAFKG), 133–156 (LASLEQLYLHFNQIETLDPDSFQH), 157–180 (LPKLERLFLHNNRITHLVPGTFNH), and 182–204 (ESMKRLRLDSNTLHCDCEILWLA). The region spanning 192-244 (NTLHCDCEILWLADLLKTYAESGNAQAAAICEYPRRIQGRSVATITPEELNCE) is the LRRCT domain. 6 disulfides stabilise this stretch: Cys-196–Cys-243, Cys-198–Cys-222, Cys-267–Cys-317, Cys-363–Cys-412, Cys-454–Cys-502, and Cys-546–Cys-594. 4 Ig-like C2-type domains span residues 246–332 (PRIT…QEVT), 342–428 (PTFV…AFII), 433–520 (PQFT…LTVQ), and 521–610 (PRVT…MVLS). 4 N-linked (GlcNAc...) asparagine glycosylation sites follow: Asn-640, Asn-699, Asn-719, and Asn-731. Cystine bridges form between Cys-723/Cys-885, Cys-732/Cys-748, Cys-847/Cys-857, and Cys-851/Cys-875. Asp-826 provides a ligand contact to heme b. Residue His-827 is the Proton acceptor of the active site. Residue Asp-828 coordinates Ca(2+). Residue Asn-865 is glycosylated (N-linked (GlcNAc...) asparagine). 4 residues coordinate Ca(2+): Thr-907, Tyr-909, Asp-911, and Ser-913. A disulfide bond links Cys-959 and Cys-970. A glycan (N-linked (GlcNAc...) asparagine) is linked at Asn-964. Positions 980 and 1074 each coordinate heme b. The LRR 7 repeat unit spans residues 1151-1175 (ALDLAAINIQRGRDHGIPPYHDYRV). Tyr-1176 is modified (phosphotyrosine). 2 cysteine pairs are disulfide-bonded: Cys-1177–Cys-1234 and Cys-1275–Cys-1301. N-linked (GlcNAc...) asparagine glycosylation is present at Asn-1178. Residue Ser-1180 is modified to Phosphoserine. The stretch at 1270-1291 (LARILCDNADNITRVQSDVFRV) is one LRR 8 repeat. N-linked (GlcNAc...) asparagine glycans are attached at residues Asn-1280, Asn-1368, and Asn-1425. Residues 1315 to 1411 (CCEDCRTRGQ…QIKKLESRLS (97 aa)) form a required in homotrimerization region. The interval 1342–1380 (YQEDKPTKKTRPRKIPSVGRQGEHLSNSTSAFSTRSDAS) is disordered. The span at 1365–1380 (HLSNSTSAFSTRSDAS) shows a compositional bias: polar residues. Positions 1413-1471 (TECVDAGGESHANNTKWKKDACTICECKDGQVTCFVEACPPATCAVPVNIPGACCPVCL) constitute a VWFC domain.

Belongs to the peroxidase family. XPO subfamily. As to quaternary structure, homotrimer; disulfide-linked. The homotrimer form is predominant. Homooligomer; disulfide-linked. Oligomerization occurs intracellularly before C-terminal proteolytic cleavage. Interacts with PXDNL; this interaction inhibits the peroxidase activity of PXDN. Requires Ca(2+) as cofactor. Heme b serves as cofactor. In terms of processing, glycosylated. Four sites are completely N-glycosylated (Asn-640, Asn-731, Asn-865 and Asn-1425), whereas the others are found partially glycosylated. Processed by FURIN and the proteolytic processing largely depends on the peroxidase activity of PXDN. The proteolytic cleavage occurs after intracellular homotrimerization and releases into the extracellular matrix a large, catalytically active fragment and a smaller fragment consisting primarily of the C-terminal VWFC domain. The processing enhances both peroxidase activity and sulfilimine cross-links formation. In terms of tissue distribution, expressed at higher levels in heart, lung, ovary, spleen, intestine and placenta, and at lower levels in liver, colon, pancreas, kidney, thymus, skeletal muscle and prostate. Expressed in tumors such as melanoma, breast cancer, ovarian cancer and glioblastoma. A shorter form probably lacking the signal sequence is found in testis and in EB1 cells undergoing p53/TP53-dependent apoptosis.

It is found in the secreted. The protein localises to the extracellular space. It localises to the extracellular matrix. Its subcellular location is the endoplasmic reticulum. The protein resides in the cell surface. It is found in the basement membrane. It catalyses the reaction L-lysyl-[collagen] + L-methionyl-[collagen] + H2O2 = [collagen]-L-lysyl-N-S-L-methionyl-[collagen] + 2 H2O + H(+). The enzyme catalyses bromide + H2O2 = hypobromite + H2O. It carries out the reaction L-lysyl-[collagen] + L-methionyl-[collagen] + hypobromite = [collagen]-L-lysyl-N-S-L-methionyl-[collagen] + bromide + H2O + H(+). The catalysed reaction is L-tyrosyl-[protein] + bromide + H2O2 + H(+) = 3-bromo-L-tyrosyl-[protein] + 2 H2O. It catalyses the reaction hypobromite + L-tyrosyl-[protein] + H(+) = 3-bromo-L-tyrosyl-[protein] + H2O. Its activity is regulated as follows. The hypobromous acid formation is activated by increasing nitrite concentrations and inhibited by increasing urate concentrations. Its function is as follows. Catalyzes the two-electron oxidation of bromide by hydrogen peroxide and generates hypobromite as a reactive intermediate which mediates the formation of sulfilimine cross-links between methionine and hydroxylysine residues within an uncross-linked collagen IV/COL4A1 NC1 hexamer. In turns, directly contributes to the collagen IV network-dependent fibronectin/FN and laminin assembly, which is required for full extracellular matrix (ECM)-mediated signaling. Thus, sulfilimine cross-links are essential for growth factor-induced cell proliferation and survival in endothelial cells, an event essential to basement membrane integrity. In addition, through the bromide oxidation, may promote tubulogenesis and induce angiogenesis through ERK1/2, Akt, and FAK pathways. Moreover brominates alpha2 collagen IV chain/COL4A2 at 'Tyr-1485' and leads to bromine enrichment of the basement membranes. In vitro, can also catalyze the two-electron oxidation of thiocyanate and iodide and these two substrates could effectively compete with bromide and thus inhibit the formation of sulfilimine bonds. Binds laminins. May play a role in the organization of eyeball structure and lens development during eye development. In Homo sapiens (Human), this protein is Peroxidasin homolog.